The sequence spans 301 residues: Putative ribosomal RNA methyltransferase PB17E12.10c (301 aa).

Positions 87, 89, 107, and 186 each coordinate S-adenosyl-L-methionine. Lys-247 (proton acceptor) is an active-site residue.

This sequence belongs to the class I-like SAM-binding methyltransferase superfamily. RNA methyltransferase RlmE family.

The enzyme catalyses a uridine in rRNA + S-adenosyl-L-methionine = a 2'-O-methyluridine in rRNA + S-adenosyl-L-homocysteine + H(+). The sequence is that of Putative ribosomal RNA methyltransferase PB17E12.10c from Schizosaccharomyces pombe (strain 972 / ATCC 24843) (Fission yeast).